Consider the following 61-residue polypeptide: Toxin S5C1 (61 aa).

Cystine bridges form between C3–C22, C16–C39, C41–C53, and C54–C59. Positions 45 to 47 match the Cell attachment site motif; sequence RGD.

The protein belongs to the three-finger toxin family. Short-chain subfamily. Antiplatelet toxin sub-subfamily. In terms of tissue distribution, expressed by the venom gland.

The protein localises to the secreted. In terms of biological role, inhibits ADP-induced platelet aggregation and inhibits the binding of purified platelet fibrinogen receptor alpha-IIb/beta-3 (ITGA2B/ITGB3) to immobilized fibrinogen. The sequence is that of Toxin S5C1 from Dendroaspis jamesoni kaimosae (Eastern Jameson's mamba).